A 195-amino-acid chain; its full sequence is MVNSCCGSVCSHQGCGRDLCQETCCRPSCCETTCCRTTYCRPSCCVSSCCRPQCCQSVCCQPTCCRPRCCISSCCRPSCCVSSCCKPQCCQSMCCQPTCCRPRCCISSCCRPSCCVSSCCRPQCCQSVCCQPTCCHPSCSISSCCRPSCCESSCCRPCCCLRPVCGRVSCHTTCYRPTCVISSCPRPLCCASSCC.

Repeat copies occupy residues 5–9 (CCGSV), 24–28 (CCRPS), 29–33 (CCETT), 34–38 (CCRTT), 44–48 (CCVSS), 49–53 (CCRPQ), 54–58 (CCQSV), 59–63 (CCQPT), 64–68 (CCRPR), 69–73 (CCISS), 74–78 (CCRPS), 79–83 (CCVSS), 84–88 (CCKPQ), 89–93 (CCQSM), 94–98 (CCQPT), 99–103 (CCRPR), 104–108 (CCISS), 109–113 (CCRPS), 114–118 (CCVSS), 119–123 (CCRPQ), 124–128 (CCQSV), 129–133 (CCQPT), 134–138 (CCHPS), 144–148 (CCRPS), 149–153 (CCESS), 154–158 (CCRPC), and 159–163 (CCLRP). Positions 5–163 (CCGSVCSHQG…CCRPCCCLRP (159 aa)) are 27 X 5 AA repeats of C-C-[GIKRQVHEL]-[SPTR]-[STVQRMC].

Belongs to the KRTAP type 4 family. Interacts with hair keratins. As to expression, expressed in the hair follicles.

In terms of biological role, in the hair cortex, hair keratin intermediate filaments are embedded in an interfilamentous matrix, consisting of hair keratin-associated proteins (KRTAP), which are essential for the formation of a rigid and resistant hair shaft through their extensive disulfide bond cross-linking with abundant cysteine residues of hair keratins. The matrix proteins include the high-sulfur and high-glycine-tyrosine keratins. This is Keratin-associated protein 4-11 (KRTAP4-11) from Homo sapiens (Human).